The following is a 465-amino-acid chain: UDP-N-acetylmuramate--L-alanine ligase (465 aa).

112–118 (GTHGKTT) contributes to the ATP binding site.

This sequence belongs to the MurCDEF family.

The protein resides in the cytoplasm. It carries out the reaction UDP-N-acetyl-alpha-D-muramate + L-alanine + ATP = UDP-N-acetyl-alpha-D-muramoyl-L-alanine + ADP + phosphate + H(+). The protein operates within cell wall biogenesis; peptidoglycan biosynthesis. Cell wall formation. The chain is UDP-N-acetylmuramate--L-alanine ligase from Burkholderia pseudomallei (strain 1106a).